The sequence spans 241 residues: Zinc finger CCHC domain-containing protein 17 (241 aa).

Residues 16 to 88 (YTIFQGEVAM…DRIKVSLSMK (73 aa)) form the S1 motif domain. Residue S114 is modified to Phosphoserine. Residues 131–148 (TTCKKCGCKGHFAKDCFM) form a CCHC-type zinc finger. Residue K144 is modified to N6-acetyllysine. The disordered stretch occupies residues 160 to 241 (EEEEEKEEAK…KKKHKKKHKE (82 aa)). Basic and acidic residues predominate over residues 166-178 (EEAKAEGLEKPDP). Over residues 182–198 (SSRKRKKEKKKKKHRDR) the composition is skewed to basic residues. S183 is subject to Phosphoserine. Over residues 211-225 (DTGKKARHSSKDSKA) the composition is skewed to basic and acidic residues. The segment covering 226–241 (TKKKKKKKKHKKKHKE) has biased composition (basic residues).

As to quaternary structure, interacts with PNN. Associates with the 60S ribosomal subunit. Expressed in liver, brain, heart, kidney testis, stomach, small intestine, skin, thymus, uterus, placenta, spleen, lung and skeletal muscle.

It is found in the nucleus. Its subcellular location is the nucleolus. This Mus musculus (Mouse) protein is Zinc finger CCHC domain-containing protein 17 (Zcchc17).